We begin with the raw amino-acid sequence, 720 residues long: NAD(+) hydrolase ApTIR (720 aa).

The region spanning 1 to 131 is the TIR domain; it reads MRYDAFISYS…AVPPALRGVF (131 aa). Residues 10 to 11 and alanine 48 contribute to the NAD(+) site; that span reads SH. Glutamate 84 is a catalytic residue. The helical transmembrane segment at 192-211 threads the bilayer; the sequence is GALAVVCALLLLVAGTAVAW. Disordered regions lie at residues 231 to 275 and 292 to 359; these read ATAA…AVAE and EGIA…EEAV. 2 stretches are compositionally biased toward basic and acidic residues: residues 256-268 and 307-359; these read EQQRAQKAAEEAR and AEAR…EEAV. The stretch at 313–362 forms a coiled coil; that stretch reads RGVADAEKAKANRAAAEAERQRKIAADEQRKAHEAAAEAERQREEAVKQQ. WD repeat units follow at residues 420-459, 465-504, 510-549, 555-594, 600-639, 645-684, and 690-720; these read GHTAVVSAVALSGDGRTLVTDGLDGTVMVWDPTDRAAPRR, SSTAPVYTVALSGDGRTLVTGSEDGTAMVWDLTDRAAPRR, GHTDVVDAVALSGDGRTLATGSFDGTAMVWDVTDRAAPRR, DHTAPVTAVALSGDGRTLATGSDDHTAMVWDLTDRAAPRR, GHTAGVDAVALSGDGRTLATGSYDGTAMLWDLTDRAAPRR, GHTAQVYTVALSRDGRTLATGSEDHTAMVWDLTDRAAPRR, and GHTDAVDAVALSGDGRTLATAASITRRCCGM.

It is found in the cell membrane. The catalysed reaction is NAD(+) + H2O = ADP-D-ribose + nicotinamide + H(+). NAD(+) hydrolase (NADase) that catalyzes cleavage of NAD(+) into ADP-D-ribose (ADPR) and nicotinamide. The sequence is that of NAD(+) hydrolase ApTIR from Actinoplanes sp. (strain ATCC 31044 / CBS 674.73 / SE50/110).